The sequence spans 227 residues: uncharacterized protein (227 aa).

2 consecutive transmembrane segments (helical) span residues 13–35 (CVRA…FAFS) and 155–177 (IFFR…MVFL). The tract at residues 192 to 227 (GDARPRPAGPQGTARSRTDEAQVSPGTPPECPVSVF) is disordered. Over residues 217 to 227 (GTPPECPVSVF) the composition is skewed to pro residues.

It is found in the cell membrane. This is an uncharacterized protein from Treponema pallidum (strain Nichols).